Reading from the N-terminus, the 234-residue chain is Thymidine kinase, cytosolic (234 aa).

Ser13 bears the Phosphoserine mark. ATP contacts are provided by residues 26 to 33 (GPMFSGKS), 58 to 60 (DTR), and 97 to 100 (DEGQ). Catalysis depends on Glu98, which acts as the Proton acceptor. Phe128 provides a ligand contact to substrate. Residues Cys153 and Cys156 each coordinate Zn(2+). Substrate-binding positions include 172 to 176 (VEVIG) and Tyr181. Zn(2+) contacts are provided by Cys185 and Cys188. The short motif at 203–205 (KEN) is the KEN box element.

It belongs to the thymidine kinase family. As to quaternary structure, homotetramer. Tetramerization from dimerization is induced by ATP and increases catalytic efficiency due to a high affinity for thymidine. Tetramerization is inhibited by phosphorylation at Ser-13. Interacts (via the KEN box) with FZR1. Post-translationally, phosphorylated on Ser-13 in mitosis. Phosphorylation of Ser-13 by CDK1 during mitosis reduces homotetramerization and catalytic efficiency when DNA replication is complete and intracellular TK1 is still present at a high level. Polyubiquitinated. Postmitosis, ubiquitination leads to proteasomal degradation. The KEN box sequence located at the C-terminal region targets for degradation by the anaphase promoting complex (APC/C) activated and rate-limited by FZR1.

The protein localises to the cytoplasm. The enzyme catalyses thymidine + ATP = dTMP + ADP + H(+). Cell-cycle-regulated enzyme of importance in nucleotide metabolism. Catalyzes the first enzymatic step in the salvage pathway converting thymidine into thymidine monophosphate. Transcriptional regulation limits expression to the S phase of the cell cycle and transient expression coincides with the oscillation in the intracellular dTTP concentration. This chain is Thymidine kinase, cytosolic (TK1), found in Cricetulus griseus (Chinese hamster).